Here is a 175-residue protein sequence, read N- to C-terminus: Apoptosis regulator Bcl-2 homolog (175 aa).

Residues 75-94 (QVLEDKINWGRIITIIAFCA) carry the BH1 motif. Positions 105–120 (SPQYYDGIISEAITDA) match the BH2 motif.

The protein belongs to the Bcl-2 family. As to quaternary structure, interacts with host BAX; this interaction inhibits BAX oligomerization and subsequent activation. Interacts with host BAK1.

The protein localises to the host mitochondrion. Plays a role in the inhibition of host apoptosis by sequestering and inactivating multiple proapoptotic BCL-2 proteins, including BAK1 and BAX. The protein is Apoptosis regulator Bcl-2 homolog of Vertebrata (FPV).